The following is a 626-amino-acid chain: Threonine--tRNA ligase (626 aa).

The editing domain stretch occupies residues 1 to 145; that stretch reads MRMLLIHSDY…SRTIVPEKAV (145 aa). Residues 207–506 are catalytic; sequence PHVRLMLEQE…QEKGIKPMYP (300 aa). Residues Cys-299, His-351, and His-475 each coordinate Zn(2+).

It belongs to the class-II aminoacyl-tRNA synthetase family. As to quaternary structure, homodimer. Zn(2+) serves as cofactor.

Its subcellular location is the cytoplasm. The enzyme catalyses tRNA(Thr) + L-threonine + ATP = L-threonyl-tRNA(Thr) + AMP + diphosphate + H(+). Catalyzes the attachment of threonine to tRNA(Thr) in a two-step reaction: L-threonine is first activated by ATP to form Thr-AMP and then transferred to the acceptor end of tRNA(Thr). Also edits incorrectly charged L-seryl-tRNA(Thr). The protein is Threonine--tRNA ligase of Thermococcus kodakarensis (strain ATCC BAA-918 / JCM 12380 / KOD1) (Pyrococcus kodakaraensis (strain KOD1)).